Consider the following 1173-residue polypeptide: Fas-binding factor 1 (1173 aa).

The segment at Met17–Tyr168 is disordered. The span at Lys46–Asp56 shows a compositional bias: basic and acidic residues. The segment covering Ala80 to Asp93 has biased composition (low complexity). Phosphoserine is present on Ser172. 2 disordered regions span residues Leu180–Pro225 and Thr241–Glu566. Residues Ser206–Ser216 show a composition bias toward low complexity. 2 stretches are compositionally biased toward basic and acidic residues: residues Asp247–Asp258 and Thr287–Tyr299. Composition is skewed to polar residues over residues Val331 to Ser345, Ser396 to Ser411, Val468 to Leu477, and Thr533 to Thr544. Coiled-coil stretches lie at residues Thr617–Ser742, Gln808–Cys917, and Cys975–Gln1057. Lys1002 participates in a covalent cross-link: Glycyl lysine isopeptide (Lys-Gly) (interchain with G-Cter in SUMO2). Residues Ala1091–Pro1124 form a disordered region. The span at Ala1110 to Pro1124 shows a compositional bias: low complexity.

In terms of assembly, interacts with PARD3. May interact with FAS cytoplasmic domain. Interacts with TRAPPC14. In terms of tissue distribution, broadly expressed.

The protein resides in the cytoplasm. The protein localises to the cytoskeleton. Its subcellular location is the microtubule organizing center. It is found in the centrosome. It localises to the centriole. The protein resides in the spindle pole. The protein localises to the cell junction. Keratin-binding protein required for epithelial cell polarization. Involved in apical junction complex (AJC) assembly via its interaction with PARD3. Required for ciliogenesis. In Mus musculus (Mouse), this protein is Fas-binding factor 1 (Fbf1).